We begin with the raw amino-acid sequence, 608 residues long: Protein transport protein SEC9 (608 aa).

Disordered regions lie at residues 1 to 23 (MGFK…SMQD) and 50 to 307 (VTQK…QTAA). Residues 9–21 (KKDPTESEIRESM) are compositionally biased toward basic and acidic residues. Composition is skewed to low complexity over residues 54 to 67 (SSAA…NPYA) and 74 to 85 (SGGNPYAAAAAG). The span at 100-121 (NGGGGNGGSNSNGGSNSNGGSN) shows a compositional bias: gly residues. Residues 122–134 (GSPYKMNNGGNNA) are compositionally biased toward low complexity. Over residues 169–183 (SKKEEAPPPLEDPRL) the composition is skewed to basic and acidic residues. Residues 198–215 (ERDDYEPVYDVGLPEEPE) show a composition bias toward acidic residues. Residues 241 to 260 (NVDRELEEDKTALFGPRDDP) are compositionally biased toward basic and acidic residues. The t-SNARE coiled-coil homology 1 domain occupies 390-452 (RFTKQQSAAS…KIAEDKAKEL (63 aa)). The disordered stretch occupies residues 514 to 533 (GEKSKHRKEMMSKYGSRPGR). Residues 545–607 (DILEDEIDNN…HLNTARLAGI (63 aa)) enclose the t-SNARE coiled-coil homology 2 domain.

Belongs to the SNAP-25 family.

The sequence is that of Protein transport protein SEC9 (SEC9) from Yarrowia lipolytica (strain CLIB 122 / E 150) (Yeast).